Here is a 319-residue protein sequence, read N- to C-terminus: Phosphoenolpyruvate transferase (319 aa).

Asp-50 contributes to the 7,8-didemethyl-8-hydroxy-5-deazariboflavin binding site.

It belongs to the CofD family. Homodimer. Mg(2+) is required as a cofactor.

It carries out the reaction enolpyruvoyl-2-diphospho-5'-guanosine + 7,8-didemethyl-8-hydroxy-5-deazariboflavin = dehydro coenzyme F420-0 + GMP + H(+). The protein operates within cofactor biosynthesis; coenzyme F420 biosynthesis. In terms of biological role, catalyzes the transfer of the phosphoenolpyruvate moiety from enoylpyruvoyl-2-diphospho-5'-guanosine (EPPG) to 7,8-didemethyl-8-hydroxy-5-deazariboflavin (FO) with the formation of dehydro coenzyme F420-0 and GMP. This chain is Phosphoenolpyruvate transferase, found in Streptomyces avermitilis (strain ATCC 31267 / DSM 46492 / JCM 5070 / NBRC 14893 / NCIMB 12804 / NRRL 8165 / MA-4680).